The chain runs to 332 residues: Glucokinase (332 aa).

15 to 20 (ADIGGT) contacts ATP.

It belongs to the bacterial glucokinase family.

It is found in the cytoplasm. The catalysed reaction is D-glucose + ATP = D-glucose 6-phosphate + ADP + H(+). The chain is Glucokinase from Campylobacter jejuni subsp. doylei (strain ATCC BAA-1458 / RM4099 / 269.97).